The sequence spans 225 residues: ATP-dependent Clp protease proteolytic subunit (225 aa).

Ser-126 (nucleophile) is an active-site residue. His-151 is an active-site residue.

Belongs to the peptidase S14 family. In terms of assembly, fourteen ClpP subunits assemble into 2 heptameric rings which stack back to back to give a disk-like structure with a central cavity, resembling the structure of eukaryotic proteasomes.

The protein localises to the cytoplasm. The enzyme catalyses Hydrolysis of proteins to small peptides in the presence of ATP and magnesium. alpha-casein is the usual test substrate. In the absence of ATP, only oligopeptides shorter than five residues are hydrolyzed (such as succinyl-Leu-Tyr-|-NHMec, and Leu-Tyr-Leu-|-Tyr-Trp, in which cleavage of the -Tyr-|-Leu- and -Tyr-|-Trp bonds also occurs).. In terms of biological role, cleaves peptides in various proteins in a process that requires ATP hydrolysis. Has a chymotrypsin-like activity. Plays a major role in the degradation of misfolded proteins. The sequence is that of ATP-dependent Clp protease proteolytic subunit from Psychrobacter arcticus (strain DSM 17307 / VKM B-2377 / 273-4).